Reading from the N-terminus, the 553-residue chain is LIM domain-containing protein B (553 aa).

The tract at residues 43 to 115 is disordered; that stretch reads LTYKDPNVST…SINNNISNNN (73 aa). Low complexity predominate over residues 99 to 114; sequence GPGLPNNSINNNISNN. LIM zinc-binding domains lie at 205–262, 263–322, 328–387, 388–447, and 448–505; these read PICG…ELFS, PRCF…RQKR, EICS…KQIL, NICG…FFGR, and QCFK…LPKE. Residues 534 to 553 are disordered; sequence ELKKERERAAKEKEKESKAK.

The protein localises to the cytoplasm. Its subcellular location is the cell cortex. It localises to the cytoskeleton. In terms of biological role, regulates and controls rearrangements of the actin cytoskeleton. Required for tip formation, morphogenesis, cell adhesion and motility, chemotaxis and aggregates formation. May function downstream of paxB. The chain is LIM domain-containing protein B (limB) from Dictyostelium discoideum (Social amoeba).